The chain runs to 338 residues: MSLREWLIAIGTLVIIGIVIDGVRRMRRARKESMAISSGMGADELKDSPLDDDFNPELPNGGARTVSRSTLEDRGYLKRDMSAPVSTDQEDDVTPESGWSARDDDEDDGILSPPRVVKPETEESEPVEPEAVKTPATEVDRSKTRPSVPEKAKAEPEPRAEEPPVVTTEVEEDTARRTPNKPRKNQPLAGANRPEAREVLVINVLARSGEQFQGSKLKSLFEACGLEQGDMDIYHRHESEDTTTPVQFSVANAVEPGTFRPQDMAGLSTPGISFFMSLPGPTNALQAFEFMLETAQCVVRNLGGELKDERRSVMTPQTIEHCRQRIREFERKQRSQRA.

At 1-2 (MS) the chain is on the periplasmic side. Residues 3–23 (LREWLIAIGTLVIIGIVIDGV) traverse the membrane as a helical segment. Topologically, residues 24–338 (RRMRRARKES…FERKQRSQRA (315 aa)) are cytoplasmic. Positions 33–192 (SMAISSGMGA…RKNQPLAGAN (160 aa)) are disordered. Composition is skewed to basic and acidic residues over residues 70–81 (TLEDRGYLKRDM) and 138–162 (EVDRSKTRPSVPEKAKAEPEPRAEE).

The protein belongs to the ZipA family. In terms of assembly, interacts with FtsZ via their C-terminal domains.

It is found in the cell inner membrane. Essential cell division protein that stabilizes the FtsZ protofilaments by cross-linking them and that serves as a cytoplasmic membrane anchor for the Z ring. Also required for the recruitment to the septal ring of downstream cell division proteins. This chain is Cell division protein ZipA, found in Marinobacter nauticus (strain ATCC 700491 / DSM 11845 / VT8) (Marinobacter aquaeolei).